A 148-amino-acid chain; its full sequence is Antigen GM6 (148 aa).

The tract at residues 1–22 (KLKASDSRSFLDPMPEGVPLSE) is disordered. Tandem repeats lie at residues 1–68 (KLKA…HELA) and 69–136 (KLKA…HELA). The 3; truncated repeat unit spans residues 137-148 (KLKASDSRSFQS).

It is found in the cytoplasm. It localises to the cytoskeleton. The sequence is that of Antigen GM6 (GM6) from Trypanosoma brucei gambiense.